The primary structure comprises 609 residues: Pentatricopeptide repeat-containing protein At1g03540 (609 aa).

14 PPR repeats span residues 25–59 (SAPT…EIPA), 60–94 (TPKL…GLET), 95–126 (DRNV…RFVK), 127–161 (DAIS…GLDA), 162–196 (NEFT…GFEW), 197–227 (NHFI…MPEP), 228–263 (DVIC…GLVP), 264–298 (DGST…GIGS), 299–329 (NVVV…MSKK), 330–364 (NSVS…DLYC), 396–426 (NVIV…MSIR), 427–461 (NMIT…GIKP), 462–497 (DYIS…GIKP), and 498–532 (GTEH…NDAS). The segment at 533-609 (LWGVLLGPCA…TVGQSWIDAH (77 aa)) is type E motif.

This sequence belongs to the PPR family. PCMP-E subfamily.

This chain is Pentatricopeptide repeat-containing protein At1g03540 (PCMP-E4), found in Arabidopsis thaliana (Mouse-ear cress).